A 356-amino-acid chain; its full sequence is Carbohydrate sulfotransferase 10 (356 aa).

Topologically, residues 1 to 6 are cytoplasmic; it reads MHHQWL. A helical; Signal-anchor for type II membrane protein membrane pass occupies residues 7-27; that stretch reads LLAACFWVIFMFMVASKFITL. At 28-356 the chain is on the lumenal side; it reads TFKDPDVYSA…GYQKPDFLLN (329 aa). Asn-99 carries N-linked (GlcNAc...) asparagine glycosylation. Residues 127–133 and 189–197 each bind 3'-phosphoadenylyl sulfate; these read PKVGNTQ and RDPFERLIS. Residues Asn-228 and Asn-316 are each glycosylated (N-linked (GlcNAc...) asparagine).

This sequence belongs to the sulfotransferase 2 family.

The protein resides in the golgi apparatus membrane. The enzyme catalyses 3-O-{beta-D-GlcA-(1-&gt;[3)-alpha-D-Xyl-(1-&gt;3)-beta-D-GlcA-(1-&gt;](n)-4)-beta-D-Xyl-(1-&gt;4)-Rib-ol-P-Rib-ol-P-3-beta-D-GalNAc-(1-&gt;3)-beta-D-GlcNAc-(1-&gt;4)-O-6-P-alpha-D-Man}-L-Thr-[protein] + 3'-phosphoadenylyl sulfate = 3-O-{O-3-S-beta-D-GlcA-(1-&gt;[3)-alpha-D-Xyl-(1-&gt;3)-beta-D-GlcA-(1-&gt;](n)-4)-beta-D-Xyl-(1-&gt;4)-Rib-ol-P-Rib-ol-P-3-beta-D-GalNAc-(1-&gt;3)-beta-D-GlcNAc-(1-&gt;4)-O-6-P-alpha-D-Man}-L-Thr-[protein] + adenosine 3',5'-bisphosphate + H(+). It catalyses the reaction 17beta-estradiol 3-O-(beta-D-glucuronate) + 3'-phosphoadenylyl sulfate = 17beta-estradiol 3-O-(3-sulfo-beta-D-glucuronate) + adenosine 3',5'-bisphosphate + H(+). It carries out the reaction 17beta-estradiol 3-O-(beta-D-glucuronate) 17-sulfate + 3'-phosphoadenylyl sulfate = 17beta-estradiol 3-O-(3-sulfo-beta-D-glucuronate) 17-sulfate + adenosine 3',5'-bisphosphate + H(+). The catalysed reaction is 17beta-estradiol 17-O-(beta-D-glucuronate) + 3'-phosphoadenylyl sulfate = 17beta-estradiol 17-O-(3-sulfo-beta-D-glucuronate) + adenosine 3',5'-bisphosphate + H(+). The enzyme catalyses 16alpha,17beta-estriol 3-O-(beta-D-glucuronate) + 3'-phosphoadenylyl sulfate = 16alpha,17beta-estriol 3-O-(3-sulfo-beta-D-glucuronate) + adenosine 3',5'-bisphosphate + H(+). It catalyses the reaction 16alpha,17beta-estriol 16-O-(beta-D-glucuronate) + 3'-phosphoadenylyl sulfate = 16alpha,17beta-estriol 16-O-(3-sulfo-beta-D-glucuronate) + adenosine 3',5'-bisphosphate + H(+). It carries out the reaction 16alpha,17beta-estriol 17-O-(beta-D-glucuronate) + 3'-phosphoadenylyl sulfate = 16alpha,17beta-estriol 17-O-(3-sulfo-beta-D-glucuronate) + adenosine 3',5'-bisphosphate + H(+). The catalysed reaction is estrone 3-O-(beta-D-glucuronate) + 3'-phosphoadenylyl sulfate = estrone 3-O-(3-sulfo-beta-D-glucuronate) + adenosine 3',5'-bisphosphate + H(+). The enzyme catalyses 3alpha,20alpha-dihydroxy-5beta-pregnane 3-O-(beta-D-glucuronate) + 3'-phosphoadenylyl sulfate = 3alpha,20alpha-dihydroxy-5beta-pregnane 3-O-(3-sulfo-beta-D-glucuronate) + adenosine 3',5'-bisphosphate + H(+). It catalyses the reaction testosterone 17-O-(beta-D-glucuronate) + 3'-phosphoadenylyl sulfate = testosterone 17-O-(3-sulfo-beta-D-glucuronate) + adenosine 3',5'-bisphosphate + H(+). It carries out the reaction 3beta-androst-5-en-17-one 3-O-(beta-D-glucuronate) + 3'-phosphoadenylyl sulfate = 3beta-androst-5-en-17-one 3-O-(3-sulfo-beta-D-glucuronate) + adenosine 3',5'-bisphosphate + H(+). The catalysed reaction is 3alpha,17alpha-dihydroxy-5beta-androstane-11-one-17beta-carboxylate 3-O-(beta-D-glucuronate) + 3'-phosphoadenylyl sulfate = 3alpha,17alpha-dihydroxy-5beta-androstane-11-one-17beta-carboxylate 3-O-(3-sulfo-beta-D-glucuronate) + adenosine 3',5'-bisphosphate + H(+). The enzyme catalyses 3alpha-hydroxyetiocholan-17-one 3-O-(beta-D-glucuronate) + 3'-phosphoadenylyl sulfate = 3alpha-hydroxyetiocholan-17-one 3-O-(3-sulfo-beta-D-glucuronate) + adenosine 3',5'-bisphosphate + H(+). It participates in steroid metabolism. The protein operates within protein modification; carbohydrate sulfation. Functionally, catalyzes the transfer of sulfate from 3'-phosphoadenylyl sulfate (PAPS) to position 3 of terminal glucuronic acid of both protein- and lipid-linked oligosaccharides. Participates in biosynthesis of HNK-1 carbohydrate structure 3-O-sulfo-beta-D-GlcA-(1-&gt;3)-beta-D-Gal-(1-&gt;4)-D-GlcNAc-R, a sulfated glucuronyl-lactosaminyl residue carried by many neural recognition molecules, which is involved in cell interactions during ontogenetic development and in synaptic plasticity in the adult. May be indirectly involved in synapse plasticity of the hippocampus, via its role in HNK-1 biosynthesis. Sulfates terminal glucuronyl residue of the laminin globular (LG)-domain binding epitope on DAG1/alpha-dystroglycan and prevents further polymerization by LARGE1 glycosyltransferase. Likely defines the chain length of LG epitope, conferring binding specificity to extracellular matrix components. Plays a role in down-regulating the steroid hormones. Sulfates glucuronidated estrogens and androgens with an impact in hormone cycle and fertility. Has a preference for glucuronyl moiety at the 3-hydroxyl group of a sterol ring rather than the 17-hydroxyl group, showing high catalytic efficiency for 17beta-estradiol 3-O-(beta-D-glucuronate) and dehydroepiandrosterone 3-O-(beta-D-glucuronate) hormones. The sequence is that of Carbohydrate sulfotransferase 10 (CHST10) from Pongo abelii (Sumatran orangutan).